A 633-amino-acid chain; its full sequence is uncharacterized protein (633 aa).

Positions 12–43 (ESGTNNYSDTIANGNTLPPRSKKGHSGRRKRS) are disordered. Positions 13–29 (SGTNNYSDTIANGNTLP) are enriched in polar residues. A compositionally biased stretch (basic residues) spans 31 to 42 (RSKKGHSGRRKR). Transmembrane regions (helical) follow at residues 99–118 (ILFG…SSAL) and 217–233 (NCAF…ITAC). A disordered region spans residues 593-612 (DAETNKATGSAKSENIETKS).

It localises to the membrane. This is an uncharacterized protein from Saccharomyces cerevisiae (strain ATCC 204508 / S288c) (Baker's yeast).